Here is a 387-residue protein sequence, read N- to C-terminus: Galactokinase (387 aa).

32–35 (EHTD) contacts substrate. ATP-binding positions include serine 66 and 123-129 (GAGLSSS). Mg(2+) contacts are provided by serine 129 and glutamate 161. The active-site Proton acceptor is the aspartate 173. Position 223 (tyrosine 223) interacts with substrate.

It belongs to the GHMP kinase family. GalK subfamily.

It localises to the cytoplasm. It carries out the reaction alpha-D-galactose + ATP = alpha-D-galactose 1-phosphate + ADP + H(+). It functions in the pathway carbohydrate metabolism; galactose metabolism. Functionally, catalyzes the transfer of the gamma-phosphate of ATP to D-galactose to form alpha-D-galactose-1-phosphate (Gal-1-P). This Enterococcus faecalis (strain ATCC 700802 / V583) protein is Galactokinase.